The following is a 113-amino-acid chain: Prostate and testis expressed protein 2 (113 aa).

Positions 1-26 are cleaved as a signal peptide; that stretch reads MLVLFLLGTVFLLCPYWGELHDPIKA. Positions 29 to 110 constitute a UPAR/Ly6 domain; the sequence is IMCYECKKYH…CDHSNYCNLP (82 aa). Intrachain disulfides connect cysteine 31-cysteine 57, cysteine 34-cysteine 42, cysteine 49-cysteine 80, and cysteine 84-cysteine 101.

This sequence belongs to the PATE family. As to expression, isoform 1 and isoform 2 are expressed in prostate and testis. Isoform 2 is expressed in male and female brain at equivalent levels, in particular in cerebellum, cerebral cortex, corpus callosum, occipital, parrietal and temporal lobes, and pons, but not in amygdala, cerebral peduncle, hippocampus and thalamus.

It is found in the secreted. The sequence is that of Prostate and testis expressed protein 2 (PATE2) from Homo sapiens (Human).